The chain runs to 496 residues: L-arabinose isomerase (496 aa).

Residues Glu302, Glu329, His346, and His445 each coordinate Mn(2+).

The protein belongs to the arabinose isomerase family. The cofactor is Mn(2+).

It catalyses the reaction beta-L-arabinopyranose = L-ribulose. It participates in carbohydrate degradation; L-arabinose degradation via L-ribulose; D-xylulose 5-phosphate from L-arabinose (bacterial route): step 1/3. In terms of biological role, catalyzes the conversion of L-arabinose to L-ribulose. This chain is L-arabinose isomerase, found in Thermotoga petrophila (strain ATCC BAA-488 / DSM 13995 / JCM 10881 / RKU-1).